The chain runs to 465 residues: Cysteine--tRNA ligase (465 aa).

Residue cysteine 30 participates in Zn(2+) binding. The 'HIGH' region signature appears at 32 to 42; it reads ITVYDYCHVGH. Zn(2+) is bound by residues cysteine 214, histidine 239, and glutamate 243. The 'KMSKS' region motif lies at 271–275; it reads KMSKS. Lysine 274 provides a ligand contact to ATP.

Belongs to the class-I aminoacyl-tRNA synthetase family. Monomer. Requires Zn(2+) as cofactor.

Its subcellular location is the cytoplasm. The catalysed reaction is tRNA(Cys) + L-cysteine + ATP = L-cysteinyl-tRNA(Cys) + AMP + diphosphate. This is Cysteine--tRNA ligase from Burkholderia multivorans (strain ATCC 17616 / 249).